The primary structure comprises 469 residues: MTVAQQAPSALNFDCETGNYHTFCPISCVSWLYQKIEDSFFLVIGTKTCGYFLQNAMGVMIFAEPRYAMAELEEGDISAQLKDYEELKRLCLQIKRDRNPSVIVWIGTCTTEIIKMDLEGLAPQLEAEIGIPIVTARANGLDYAFTQGEDTVLASMAHKCPTSAQVQGEDKEERNAIQKLLTFGRKADQEKVESEYVDHQPLVLFGSLPDPVVTNLTLELKKQGVKVSGWLPAKRYTELPVIDEGYYVAGVNPFLSRTATTLMRRRKCKLIGAPFPIGPDGTRAWIEKICSVLGIEPQGLEEREAQIWASLEDYIQLIRGKSVFFMGDNLLEVSLARFLIRCGMTCPEIGIPYMDKRYQAAELALLEKTCSDMGVPLPNIVEKPDNYNQIQRIKALQPDLVITGMAHANPLEAQGINTKWSVEFTFAQIHGFTNARDILELATRPLRRNSQLGELGWDKLIAKDVPAQV.

Positions 24, 49, and 109 each coordinate [4Fe-4S] cluster.

This sequence belongs to the BchN/ChlN family. Protochlorophyllide reductase is composed of three subunits; ChlL, ChlN and ChlB. Forms a heterotetramer of two ChlB and two ChlN subunits. [4Fe-4S] cluster serves as cofactor.

It carries out the reaction chlorophyllide a + oxidized 2[4Fe-4S]-[ferredoxin] + 2 ADP + 2 phosphate = protochlorophyllide a + reduced 2[4Fe-4S]-[ferredoxin] + 2 ATP + 2 H2O. It participates in porphyrin-containing compound metabolism; chlorophyll biosynthesis (light-independent). In terms of biological role, component of the dark-operative protochlorophyllide reductase (DPOR) that uses Mg-ATP and reduced ferredoxin to reduce ring D of protochlorophyllide (Pchlide) to form chlorophyllide a (Chlide). This reaction is light-independent. The NB-protein (ChlN-ChlB) is the catalytic component of the complex. This is Light-independent protochlorophyllide reductase subunit N from Synechocystis sp. (strain ATCC 27184 / PCC 6803 / Kazusa).